Reading from the N-terminus, the 129-residue chain is MSKEKTPRSLGDNEAKAVARMLRVSPQKLNLVAQLIRGKKVDKALADLEFSRKRIAYDVKKTLESAIANAENNHSLDVDDLIVAEAFVGKAMVMKRFSPRARGRSGRIEKPFAHLTIVVREVTAVAAGA.

It belongs to the universal ribosomal protein uL22 family. As to quaternary structure, part of the 50S ribosomal subunit.

This protein binds specifically to 23S rRNA; its binding is stimulated by other ribosomal proteins, e.g. L4, L17, and L20. It is important during the early stages of 50S assembly. It makes multiple contacts with different domains of the 23S rRNA in the assembled 50S subunit and ribosome. Functionally, the globular domain of the protein is located near the polypeptide exit tunnel on the outside of the subunit, while an extended beta-hairpin is found that lines the wall of the exit tunnel in the center of the 70S ribosome. The sequence is that of Large ribosomal subunit protein uL22 from Beijerinckia indica subsp. indica (strain ATCC 9039 / DSM 1715 / NCIMB 8712).